A 295-amino-acid polypeptide reads, in one-letter code: uncharacterized protein (295 aa).

Residues 1–19 (MHKLLLIITVFSTFNVAQA) form the signal peptide.

This is an uncharacterized protein from Rickettsia typhi (strain ATCC VR-144 / Wilmington).